We begin with the raw amino-acid sequence, 407 residues long: Tryptophan synthase beta chain (407 aa).

Residue Lys91 is modified to N6-(pyridoxal phosphate)lysine.

This sequence belongs to the TrpB family. In terms of assembly, tetramer of two alpha and two beta chains. The cofactor is pyridoxal 5'-phosphate.

The enzyme catalyses (1S,2R)-1-C-(indol-3-yl)glycerol 3-phosphate + L-serine = D-glyceraldehyde 3-phosphate + L-tryptophan + H2O. Its pathway is amino-acid biosynthesis; L-tryptophan biosynthesis; L-tryptophan from chorismate: step 5/5. Functionally, the beta subunit is responsible for the synthesis of L-tryptophan from indole and L-serine. The sequence is that of Tryptophan synthase beta chain from Streptococcus pneumoniae (strain Taiwan19F-14).